The sequence spans 362 residues: Probable branched-chain-amino-acid aminotransferase (362 aa).

Position 202 is an N6-(pyridoxal phosphate)lysine (Lys-202).

It belongs to the class-IV pyridoxal-phosphate-dependent aminotransferase family. Pyridoxal 5'-phosphate is required as a cofactor.

The enzyme catalyses L-leucine + 2-oxoglutarate = 4-methyl-2-oxopentanoate + L-glutamate. It catalyses the reaction L-isoleucine + 2-oxoglutarate = (S)-3-methyl-2-oxopentanoate + L-glutamate. It carries out the reaction L-valine + 2-oxoglutarate = 3-methyl-2-oxobutanoate + L-glutamate. Its pathway is amino-acid biosynthesis; L-isoleucine biosynthesis; L-isoleucine from 2-oxobutanoate: step 4/4. It functions in the pathway amino-acid biosynthesis; L-leucine biosynthesis; L-leucine from 3-methyl-2-oxobutanoate: step 4/4. The protein operates within amino-acid biosynthesis; L-valine biosynthesis; L-valine from pyruvate: step 4/4. In terms of biological role, acts on leucine, isoleucine and valine. This Streptomyces coelicolor (strain ATCC BAA-471 / A3(2) / M145) protein is Probable branched-chain-amino-acid aminotransferase (ilvE).